Here is a 3117-residue protein sequence, read N- to C-terminus: Centrosome-associated protein 350 (3117 aa).

A disordered region spans residues 1–24 (MRSSKSKEVPLPNPRNSQSKDTVQ). Residues 14–24 (PRNSQSKDTVQ) are compositionally biased toward polar residues. A phosphoserine mark is found at Ser-86, Ser-139, Ser-142, and Ser-218. 4 disordered regions span residues 249–275 (PKAL…ILKR), 436–514 (ILGP…NKQE), 548–625 (TVEL…TEQK), and 671–722 (LEEP…PPQP). The span at 255-267 (TDSSPSSTSTSNS) shows a compositional bias: low complexity. The segment covering 469–501 (GRAESDPRLDVLHRHLQRNSERSRSKSRSENNI) has biased composition (basic and acidic residues). 2 positions are modified to phosphoserine: Ser-473 and Ser-507. The segment covering 563 to 573 (PRSHSPVKRKP) has biased composition (basic residues). 2 stretches are compositionally biased toward basic and acidic residues: residues 591-625 (YDTD…TEQK) and 694-703 (ESDKENKVQE). Residues 598-645 (QYIVRQQEERKRKQNEEKKAQKEATEQKNKRLQELYRKQKEAFTKVKN) are a coiled coil. A Phosphoserine modification is found at Ser-695. Positions 705 to 718 (PPSASSSSDMSLSE) are enriched in low complexity. Thr-878 carries the phosphothreonine modification. Phosphoserine is present on Ser-939. Positions 981–992 (SVSEGPLLSEGS) are enriched in low complexity. The interval 981–1002 (SVSEGPLLSEGSLSEEEGDQDG) is disordered. Ser-1061 bears the Phosphoserine mark. The tract at residues 1081–1298 (EDKLDRGTST…GFKPNAPLTD (218 aa)) is disordered. The span at 1087–1102 (GTSTSRPLNATATPLS) shows a compositional bias: polar residues. Residues 1135–1144 (QEDHSNRKSA) are compositionally biased toward basic and acidic residues. 2 stretches are compositionally biased toward low complexity: residues 1153–1172 (TSQH…STSS) and 1251–1267 (QKTP…KSLQ). Phosphothreonine is present on Thr-1253. Phosphoserine is present on residues Ser-1256 and Ser-1259. Residues 1272–1283 (GTSSERSKSSVM) show a composition bias toward polar residues. The stretch at 1369-1411 (IKAQQQRHERDLALLKLKAEQEALESQRQLEETRNKAAQVHAE) forms a coiled coil. Disordered stretches follow at residues 1494 to 1674 (TRTE…GGQD) and 1794 to 1854 (KLKS…SRMD). Residues 1503–1512 (PSVSLSQSKE) are compositionally biased toward polar residues. Low complexity-rich tracts occupy residues 1522 to 1535 (YSAS…SSGY) and 1543 to 1556 (SSGS…SVPS). Residues 1558–1571 (KENEKKLNGEKIES) are compositionally biased toward basic and acidic residues. Phosphoserine is present on Ser-1613. Basic and acidic residues predominate over residues 1631 to 1647 (ESHRRFNMEKRRGHHDD). Phosphoserine occurs at positions 1648 and 1653. The stretch at 1707-1800 (KALKEKTKAE…LQEKLKSAGE (94 aa)) forms a coiled coil. Residues 1794–1815 (KLKSAGESKLDSHSDDDTKDNK) show a composition bias toward basic and acidic residues. Ser-1818 carries the post-translational modification Phosphoserine. The span at 1827-1841 (RSPSPISISSSETSS) shows a compositional bias: low complexity. Residues 1856–1899 (KFLTKREQKLMQRRQHAEELLEWKRRLDAEEAEIRQMEKQALAA) adopt a coiled-coil conformation. Residues 1903-1925 (ELIKPKTPKKELEDQRTEQKEIA) are compositionally biased toward basic and acidic residues. 4 disordered regions span residues 1903–2020 (ELIK…QCHL), 2107–2221 (ELSQ…ESGD), 2329–2356 (LKER…QKNT), and 2407–2432 (KDSQ…FGSN). Ser-1936 carries the post-translational modification Phosphoserine. Residues 1983 to 2005 (ELESSTSPSKHSLPKSCTSVSKQ) show a composition bias toward polar residues. A coiled-coil region spans residues 2051–2110 (EGRIRALKDELRKRKSVVNQLKKEQKKRQKERLKAQEASLIKQLESYDEFIKKTEAELSQ). The segment covering 2111 to 2129 (DLETSPTAKPQIKTLSSAS) has biased composition (polar residues). Ser-2115 bears the Phosphoserine mark. Over residues 2141–2170 (HRSETAKNWKSLTESERSRGSLESIAEHVD) the composition is skewed to basic and acidic residues. The span at 2173 to 2184 (LSGSERSVSERS) shows a compositional bias: polar residues. A compositionally biased stretch (basic and acidic residues) spans 2191–2201 (RVNEWDSRTED). Thr-2204 is modified (phosphothreonine). Ser-2206 carries the post-translational modification Phosphoserine. Composition is skewed to basic and acidic residues over residues 2329–2338 (LKERQSDQDM) and 2407–2417 (KDSQSCRDKPQ). Residues 2419 to 2432 (MRSSTSGATSFGSN) show a composition bias toward polar residues. Residues Ser-2431 and Ser-2460 each carry the phosphoserine modification. The segment covering 2465-2478 (MKSKERSDVEHEQQ) has biased composition (basic and acidic residues). The interval 2465–2485 (MKSKERSDVEHEQQVTESPSL) is disordered. Residues 2517-2559 (GETSFAKGFWAGVELDKPEGNNNGTYDGIAYFECKEKHGIFAP) form the CAP-Gly domain. Thr-2689 bears the Phosphothreonine mark. Positions 2719–2752 (LLDLLTREKNQLEAQLKSSLNEEKKSKQQLEKIS) form a coiled coil. Phosphoserine occurs at positions 2830 and 2839.

As to quaternary structure, part of a ternary complex that contains CEP350, CEP43 and MAPRE1. Interacts (via C-terminus) directly with CEP43 (via N-terminus). Interacts with NR1H3, PPARA, PPARD and PPARG. Interacts directly with microtubules. Interacts with the fusion protein CEP43-FGFR1, and by doing so recruits and activates PI3K and PLC-gamma. Interacts with CYLD. Interacts with CFAP157. Interacts with CEP19 (via C-terminus). Interacts with CEP78; promoting CEP78 localization to centrosome and centriole. In terms of processing, phosphorylated during mitosis. As to expression, detected in heart, brain, skeletal muscle, testis, placenta, lung, liver, kidney and pancreas.

The protein resides in the cytoplasm. The protein localises to the cytoskeleton. It is found in the microtubule organizing center. Its subcellular location is the centrosome. It localises to the spindle. The protein resides in the nucleus. The protein localises to the centriole. It is found in the cilium basal body. Its function is as follows. Plays an essential role in centriole growth by stabilizing a procentriolar seed composed of at least, SASS6 and CPAP. Required for anchoring microtubules to the centrosomes and for the integrity of the microtubule network. Recruits PPARA to discrete subcellular compartments and thereby modulates PPARA activity. Required for ciliation. The sequence is that of Centrosome-associated protein 350 from Homo sapiens (Human).